Reading from the N-terminus, the 98-residue chain is MKHEIKHDPAFRALTPKWHHGYRFQYEPAQKAHVVLYPEGMIKLNDSASLIGGLIDGERTIAAIIAELQREFPNIPELGMDVDDFMKVAKEKYWIDLV.

It belongs to the PqqD family. In terms of assembly, monomer. Interacts with PqqE.

Its pathway is cofactor biosynthesis; pyrroloquinoline quinone biosynthesis. In terms of biological role, functions as a PqqA binding protein and presents PqqA to PqqE, in the pyrroloquinoline quinone (PQQ) biosynthetic pathway. This Pseudomonas syringae pv. tomato (strain ATCC BAA-871 / DC3000) protein is PqqA binding protein.